Consider the following 1271-residue polypeptide: Chitin synthase 4 (1271 aa).

Disordered regions lie at residues 1–45 (MPPT…SFDH) and 58–117 (PNHP…ERPS). Polar residues predominate over residues 21–30 (APDTQESSPA). Transmembrane regions (helical) follow at residues 165–185 (WWIRITWMMTWWIPSFLLVHL) and 201–221 (LAIFMMICLACAVVLFYIIFF). The N-linked (GlcNAc...) asparagine glycan is linked to Asn407. Residues 473–493 (LLLAFSIILIATIASKFLAAL) traverse the membrane as a helical segment. Residues Asn713 and Asn836 are each glycosylated (N-linked (GlcNAc...) asparagine). The next 3 membrane-spanning stretches (helical) occupy residues 867–887 (LLGTIILPATCGYLIYLVIVV), 894–914 (IPVISLAMIGATYGLQALIFI), and 919–939 (FMLIGWMLVYILAFPVWSVFL). The segment at 999–1081 (HSESPAPSEK…DKSFIRGSKP (83 aa)) is disordered. The segment covering 1027–1037 (RSPSFHSSASE) has biased composition (polar residues). N-linked (GlcNAc...) asparagine glycosylation is found at Asn1055 and Asn1161. One can recognise a DEK-C domain in the interval 1213-1269 (EVQDEEVLDKLKTWLSKQDLMSVTKRQTREAIYTLFPNAGLQNRAGWLNEQIDKILS).

Belongs to the chitin synthase family.

The protein resides in the cell membrane. It carries out the reaction [(1-&gt;4)-N-acetyl-beta-D-glucosaminyl](n) + UDP-N-acetyl-alpha-D-glucosamine = [(1-&gt;4)-N-acetyl-beta-D-glucosaminyl](n+1) + UDP + H(+). Polymerizes chitin, a structural polymer of the cell wall and septum, by transferring the sugar moiety of UDP-GlcNAc to the non-reducing end of the growing chitin polymer. Produces a large proportion of the chitin that is not deacetylated to chitosan. The polypeptide is Chitin synthase 4 (Cryptococcus neoformans var. grubii serotype A (strain H99 / ATCC 208821 / CBS 10515 / FGSC 9487) (Filobasidiella neoformans var. grubii)).